Here is a 624-residue protein sequence, read N- to C-terminus: Translocator protein BipB (624 aa).

A disordered region spans residues 54–99 (LASEQCDAQPVTDDARLDRLDDKPALRAPRSDAAHAADGNARGNGG). Over residues 66-88 (DDARLDRLDDKPALRAPRSDAAH) the composition is skewed to basic and acidic residues. Residues 313–343 (EMQAKREAELQKKSDEYQEQVKKAEEMQKTM) adopt a coiled-coil conformation. The next 3 helical transmembrane spans lie at 359–379 (FAAA…GLAL), 405–425 (AILK…LVAC), and 434–454 (LAGA…AAFV).

The protein belongs to the SctE/SipB/YopB family.

It localises to the secreted. The protein resides in the host membrane. Its function is as follows. Plays a role in the bacterium-induced formation of multinucleated giant cell (MNGC), which is formed after host cell fusion, as well as in the intercellular spreading of bacteria and in the induction of apoptosis in macrophages. May act in concert with other effector proteins to induce fusion of host cell membranes. The chain is Translocator protein BipB (bipB) from Burkholderia thailandensis (strain ATCC 700388 / DSM 13276 / CCUG 48851 / CIP 106301 / E264).